We begin with the raw amino-acid sequence, 92 residues long: UPF0223 protein Sez_0908 (92 aa).

Belongs to the UPF0223 family.

This Streptococcus equi subsp. zooepidemicus (strain MGCS10565) protein is UPF0223 protein Sez_0908.